Reading from the N-terminus, the 210-residue chain is 2-Cys peroxiredoxin BAS1, chloroplastic (210 aa).

The N-terminal 10 residues, 1-10, are a transit peptide targeting the chloroplast; it reads DARARSFVAR. Residues 18 to 177 enclose the Thioredoxin domain; sequence PLVGNKAPDF…TLRTLQALQY (160 aa). The active-site Cysteine sulfenic acid (-SOH) intermediate is C64.

This sequence belongs to the peroxiredoxin family. AhpC/Prx1 subfamily. In terms of assembly, homodimer; disulfide-linked, upon oxidation. Expressed in leaf blade, sheath, basiplast, stem and green spike. Maximal expression in young developing shoots segments where cell division and elongation take place. Not expressed in roots.

It localises to the plastid. It is found in the chloroplast. It carries out the reaction a hydroperoxide + [thioredoxin]-dithiol = an alcohol + [thioredoxin]-disulfide + H2O. In terms of biological role, thiol-specific peroxidase that catalyzes the reduction of hydrogen peroxide and organic hydroperoxides to water and alcohols, respectively. Plays a role in cell protection against oxidative stress by detoxifying peroxides. May be an antioxidant enzyme particularly in the developing shoot and photosynthesizing leaf. The sequence is that of 2-Cys peroxiredoxin BAS1, chloroplastic (BAS1) from Hordeum vulgare (Barley).